The chain runs to 158 residues: MKMKCFAKNALAVTTLMIAACGMANASTVINSKDVSGEVTVKQGNTFHVDFAPNTGEIFAGKQPGDVTMFTLTMGDTAPHGGWRLIPTGDSKGGYMISADGDYVGLYSYMMSWVGIDNNWYINDDSPKDIKDHLYVKAGTVLKPTTYKFTGRVEEYVF.

The signal sequence occupies residues 1–26 (MKMKCFAKNALAVTTLMIAACGMANA).

As to quaternary structure, forms a homomer composed of subunits assembled in a large structure.

The protein resides in the fimbrium. Functionally, fibrillar structure, part of fimbriae, necessary for full virulence. The polypeptide is pH 6 antigen (psaA) (Yersinia pestis).